The primary structure comprises 325 residues: Probable WRKY transcription factor 11 (325 aa).

A DNA-binding region (WRKY) is located at residues 240–306 (KIADIPPDEY…YEGEHRHNQS (67 aa)).

This sequence belongs to the WRKY group II-d family. In terms of tissue distribution, in young, mature and senescent leaves.

It localises to the nucleus. Its function is as follows. Transcription factor. Interacts specifically with the W box (5'-(T)TGAC[CT]-3'), a frequently occurring elicitor-responsive cis-acting element. Regulates rhizobacterium B.cereus AR156-induced systemic resistance (ISR) to P.syringae pv. tomato DC3000, probably by activating the jasmonic acid (JA)- signaling pathway. The sequence is that of Probable WRKY transcription factor 11 (WRKY11) from Arabidopsis thaliana (Mouse-ear cress).